Consider the following 258-residue polypeptide: UPF0246 protein YaaA (258 aa).

This sequence belongs to the UPF0246 family.

The sequence is that of UPF0246 protein YaaA from Escherichia coli (strain K12 / MC4100 / BW2952).